A 233-amino-acid chain; its full sequence is Small ribosomal subunit protein uS3 (233 aa).

One can recognise a KH type-2 domain in the interval 39-107 (VRQFLMKTLE…PVQINISEVR (69 aa)).

Belongs to the universal ribosomal protein uS3 family. In terms of assembly, part of the 30S ribosomal subunit. Forms a tight complex with proteins S10 and S14.

Binds the lower part of the 30S subunit head. Binds mRNA in the 70S ribosome, positioning it for translation. This Buchnera aphidicola subsp. Acyrthosiphon pisum (strain APS) (Acyrthosiphon pisum symbiotic bacterium) protein is Small ribosomal subunit protein uS3.